Consider the following 182-residue polypeptide: Adenine phosphoribosyltransferase (182 aa).

Belongs to the purine/pyrimidine phosphoribosyltransferase family. As to quaternary structure, homodimer.

It is found in the cytoplasm. The enzyme catalyses AMP + diphosphate = 5-phospho-alpha-D-ribose 1-diphosphate + adenine. Its pathway is purine metabolism; AMP biosynthesis via salvage pathway; AMP from adenine: step 1/1. Its function is as follows. Catalyzes a salvage reaction resulting in the formation of AMP, that is energically less costly than de novo synthesis. The chain is Adenine phosphoribosyltransferase from Pseudomonas fluorescens (strain SBW25).